A 219-amino-acid polypeptide reads, in one-letter code: Large ribosomal subunit protein uL29m (219 aa).

The interval 77-97 (ASKYPLPKPVSPEKLEKREST) is disordered. The span at 87–97 (SPEKLEKREST) shows a compositional bias: basic and acidic residues.

The protein belongs to the universal ribosomal protein uL29 family. As to quaternary structure, component of the mitochondrial large ribosomal subunit. Mature mitochondrial ribosomes consist of a small (37S) and a large (54S) subunit. The 37S subunit contains at least 33 different proteins and 1 molecule of RNA (15S). The 54S subunit contains at least 45 different proteins and 1 molecule of RNA (21S).

The protein resides in the mitochondrion. This chain is Large ribosomal subunit protein uL29m (mrpl4), found in Emericella nidulans (strain FGSC A4 / ATCC 38163 / CBS 112.46 / NRRL 194 / M139) (Aspergillus nidulans).